An 800-amino-acid polypeptide reads, in one-letter code: General transcription and DNA repair factor IIH helicase/translocase subunit XPB (800 aa).

Residues 1 to 27 (MSSGDSNLKRRRGGNTGQSSKSYNTWT) form a disordered region. Residues 17–27 (GQSSKSYNTWT) are compositionally biased toward polar residues. The Helicase ATP-binding domain occupies 329 to 491 (MFGNGRARSG…DLNFLIGPKL (163 aa)). Residue 342–349 (LPCGAGKS) coordinates ATP. Residues 444–447 (DEVH) carry the DEVH box motif. The 159-residue stretch at 546–704 (RACEYLIRFH…ELPGIDQEVN (159 aa)) folds into the Helicase C-terminal domain. The interval 743-769 (GAKKSKSSAPTVSRTTGGSTRALSGGN) is disordered. Polar residues predominate over residues 749–764 (SSAPTVSRTTGGSTRA).

This sequence belongs to the helicase family. RAD25/XPB subfamily. As to quaternary structure, component of the 7-subunit TFIIH core complex composed of XPB/repB, XPD/repD, gtf2h1, gtf2h2, gtf2h3, gtf2h4 and gtf2h5, which is active in NER. The core complex associates with the 3-subunit CDK-activating kinase (CAK) module composed of cycH/cyclin H, cdk7 and mnat1 to form the 10-subunit holoenzyme (holo-TFIIH) active in transcription.

It is found in the nucleus. The enzyme catalyses Couples ATP hydrolysis with the unwinding of duplex DNA by translocating in the 3'-5' direction.. It catalyses the reaction ATP + H2O = ADP + phosphate + H(+). Its function is as follows. ATP-dependent 3'-5' DNA helicase/translocase; binds dsDNA rather than ssDNA, unzipping it in a translocase rather than classical helicase activity. Component of the general transcription and DNA repair factor IIH (TFIIH) core complex. When complexed to CDK-activating kinase (CAK), involved in RNA transcription by RNA polymerase II. The ATPase activity of XPB/ERCC3, but not its helicase activity, is required for DNA opening; it may wrap around the damaged DNA wedging it open, causing localized melting and twisting that allows XPD/ERCC2 helicase to anchor. The ATP-dependent helicase activity of XPB/ERCC3 may be required for promoter escape. Also involved in transcription-coupled nucleotide excision repair (NER) of damaged DNA. In NER, TFIIH acts by opening DNA around the lesion to allow the excision of the damaged oligonucleotide and its replacement by a new DNA fragment. The structure of the TFIIH transcription complex differs from the NER-TFIIH complex. The chain is General transcription and DNA repair factor IIH helicase/translocase subunit XPB from Dictyostelium discoideum (Social amoeba).